A 475-amino-acid polypeptide reads, in one-letter code: Ankyrin repeat, SAM and basic leucine zipper domain-containing protein 1 (475 aa).

A disordered region spans residues 1-25; sequence MAASALRGLPVAGGGESSESEDDGW. A phosphoserine mark is found at serine 17, serine 18, and serine 20. 6 ANK repeats span residues 45–74, 78–107, 110–144, 148–177, 181–210, and 214–243; these read EKKEKFKKAMTIGDVSLVQELLDSGISVDS, YGWTPLMYAASVANAELVRVLLDRGANASF, DKQSILITACSAHGSEEQILKCVELLLSRNADPNV, RLMTPIMYAARDGHTQVVALLVAHGAEVNT, NGYTALTWAARQGHKNIVLKLLELGANKML, and DGKMPSEIAKRNKHHEIFNLLSFTLNPLEG. Residues 272–334 form the SAM domain; that stretch reads SYTAFGDLEV…KILAALKELQ (63 aa).

In terms of assembly, interacts with DDX4, PIWIL1, RANBP9 and TDRD1. Expressed exclusively in the testis and ovary and at higher levels in the adult testis compared with the adult ovary.

It localises to the cytoplasm. Its function is as follows. Plays a central role during spermatogenesis by repressing transposable elements and preventing their mobilization, which is essential for the germline integrity. Acts via the piRNA metabolic process, which mediates the repression of transposable elements during meiosis by forming complexes composed of piRNAs and Piwi proteins and governs the methylation and subsequent repression of transposons. Its association with pi-bodies suggests a participation in the primary piRNAs metabolic process. Required prior to the pachytene stage to facilitate the production of multiple types of piRNAs, including those associated with repeats involved in the regulation of retrotransposons. May act by mediating protein-protein interactions during germ cell maturation. This chain is Ankyrin repeat, SAM and basic leucine zipper domain-containing protein 1, found in Homo sapiens (Human).